Here is a 592-residue protein sequence, read N- to C-terminus: Ferric-chelate reductase 1 (592 aa).

Residues 2-22 traverse the membrane as a helical segment; that stretch reads AAPQITLSVLVIALLTCSVTA. Positions 13–179 constitute a Reelin domain; that stretch reads IALLTCSVTA…FTTPKATTQP (167 aa). 4 N-linked (GlcNAc...) asparagine glycosylation sites follow: Asn-85, Asn-308, Asn-321, and Asn-353. A DOMON domain is found at 216-331; it reads EPACVFLSFT…ESYYIFFAEG (116 aa). The 200-residue stretch at 335–534 folds into the Cytochrome b561 domain; it reads DGRIFRHSQQ…IGTEVILEIH (200 aa). A helical transmembrane segment spans residues 372–392; it reads AHGALMFVAWMTTVSIGVLVA. Residues His-373 and His-414 each contribute to the heme b site. 5 helical membrane-spanning segments follow: residues 415-435, 446-466, 477-499, 515-535, and 569-589; these read RMLMVATSLLTCVAFVLPFVY, HPYLGCTVMTLAVLQPLLATF, VFNWTHWSVGTAARIIAVAAMFL, YAMMGFVVWHIGTEVILEIHA, and VVLAVYICGNVIFLSIFLSAI. Residues His-446 and His-482 each contribute to the heme b site.

This sequence belongs to the FRRS1 family. It depends on heme b as a cofactor. As to expression, expressed in spleen, liver and kidney with low expression in brain. Localizes in adult brain to the choroid plexus of the fourth, third, and lateral ventricles and to ependymal cells that line the ventricles.

Its subcellular location is the membrane. Its function is as follows. Ferric-chelate reductases reduce Fe(3+) to Fe(2+) before its transport from the endosome to the cytoplasm. This Mus musculus (Mouse) protein is Ferric-chelate reductase 1 (FRRS1).